Here is a 139-residue protein sequence, read N- to C-terminus: Membrane protein YqfB (139 aa).

Residues 3-23 (DLLTNPLIIAAIIGIISAIFG) traverse the membrane as a helical segment. Positions 25-87 (KSKEEKQNSQ…TARNLKGLER (63 aa)) are disordered. A coiled-coil region spans residues 62-97 (NRMEQARREAEERRRETARNLKGLERDLAAAKQKTV). A compositionally biased stretch (basic and acidic residues) spans 65 to 87 (EQARREAEERRRETARNLKGLER).

It localises to the cell membrane. The protein is Membrane protein YqfB (yqfB) of Bacillus subtilis (strain 168).